The following is a 355-amino-acid chain: MAGRSAARRPRGDREPLGPRLRAPRPAREPRQSESRAERGLPPSQRSSVRSAASGHDRSTRGAPAGACKPRVKKKVRPRSSQSEKVGSSSRELTRSKKVTRSKNVTGTQVEEVTKIEEATQTEEVTVAEEVTQTDNMAKTEEMVQTEEMETPRLSVIVTHSNERYDLLVTPQQGNSEPVVQDLAQLVEEATGVPLPFQKLIFKGKSLKEMETPLSALGMQNGCRVMLIGEKSNPEEEVELKKLKDLEVSAEKIANHLQELNKELSGIQQGFLAKELQAEALCKLDRKVKATIEQFMKILEEIDTMVLPEQFKDSRLKRKNLVKKVQVFLAECDTVEQYICQETERLQSTNLALAE.

Residues 1–112 (MAGRSAARRP…KNVTGTQVEE (112 aa)) form a disordered region. The span at 26–39 (PAREPRQSESRAER) shows a compositional bias: basic and acidic residues. Polar residues-rich tracts occupy residues 80–91 (SSQSEKVGSSSR) and 102–111 (SKNVTGTQVE). 7 consecutive repeat copies span residues 103–108 (KNVTGT), 111–116 (EEVTKI), 117–122 (EEATQT), 123–128 (EEVTVA), 129–134 (EEVTQT), 141–146 (EEMVQT), and 147–152 (EEMETP). Residues 111–209 (EEVTKIEEAT…LIFKGKSLKE (99 aa)) form a 7 X 6 AA tandem repeat of E-E-X(4) region. Positions 132–151 (TQTDNMAKTEEMVQTEEMET) are disordered. Residues 154–234 (LSVIVTHSNE…VMLIGEKSNP (81 aa)) enclose the Ubiquitin-like domain. Positions 182 to 229 (DLAQLVEEATGVPLPFQKLIFKGKSLKEMETPLSALGMQNGCRVMLIG) are interaction with HSPA8. The interval 226–355 (MLIGEKSNPE…LQSTNLALAE (130 aa)) is interaction with PPP1R15A. In terms of domain architecture, BAG spans 256–336 (HLQELNKELS…VFLAECDTVE (81 aa)).

Homodimer. Forms a heteromeric complex with HSP70/HSC70. Binds to the ATPase domain of HSP/HSC70 chaperones. Interacts with NR3C1. Interacts with the N-terminal region of MAPRE2. Interacts with PPP1R15A. Interacts with BCL2 in an ATP-dependent manner. Interacts with SIAH1, HSPA8 (via NBD), HSPA1A (via NBD) and HSPA1B (via NBD). Interacts with SIAH2. Interacts with ESR1; the interaction is promoted in the absence of estradiol (17-beta-estradiol/E2). Ubiquitinated; mediated by SIAH1 or SIAH2 and leading to its subsequent proteasomal degradation. Isoform 2 is expressed in the heart, lung, kidney and spinal cord. Isoform 1 and isoform 2 are expressed in hematopoietic cell lines. The levels of isoform 2 are relatively constant in all the cell lines examined while the levels of isoform 1 are more variable (at protein level). Isoform 1 is expressed in the lung and kidney. Isoform 2 is expressed in various tissues, with highest levels in testis and stomach.

It is found in the nucleus. It localises to the cytoplasm. In terms of biological role, co-chaperone for HSP70 and HSC70 chaperone proteins. Acts as a nucleotide-exchange factor (NEF) promoting the release of ADP from the HSP70 and HSC70 proteins thereby triggering client/substrate protein release. Nucleotide release is mediated via its binding to the nucleotide-binding domain (NBD) of HSPA8/HSC70 where as the substrate release is mediated via its binding to the substrate-binding domain (SBD) of HSPA8/HSC70. Inhibits the pro-apoptotic function of PPP1R15A, and has anti-apoptotic activity. Markedly increases the anti-cell death function of BCL2 induced by various stimuli. Involved in the STUB1-mediated proteasomal degradation of ESR1 in response to age-related circulating estradiol (17-beta-estradiol/E2) decline, thereby promotes neuronal apoptosis in response to ischemic reperfusion injury. The sequence is that of BAG family molecular chaperone regulator 1 (Bag1) from Mus musculus (Mouse).